The sequence spans 1519 residues: Rho guanine nucleotide exchange factor 40 (1519 aa).

Disordered stretches follow at residues 194-237 and 253-503; these read VGHQ…PVEG and RGSP…LETV. A compositionally biased stretch (pro residues) spans 200 to 218; the sequence is TLPPELPSGPPGLPSPPLP. A Phosphoserine modification is found at Ser262. The span at 280 to 290 shows a compositional bias: basic residues; it reads KGRHRRHRAWM. A compositionally biased stretch (low complexity) spans 314-341; it reads ASPESPPGAEAVPEAAVLEVSEPPAEAV. Residues 355 to 367 are compositionally biased toward gly residues; the sequence is LRGGGGGGQGAEG. Thr371 carries the post-translational modification Phosphothreonine. The segment covering 374–386 has biased composition (basic residues); sequence RTGKGNRRKKRAA. Phosphoserine is present on Ser419. Basic and acidic residues predominate over residues 421-457; it reads SEHKLPECHLVKEEYEGSGKPESEPKELKTAGEKEPQ. The stretch at 828 to 871 forms a coiled coil; it reads SAEVQERLAQAREALALEENATSQKVLDIFEQRLEQVESGLHRA. Phosphoserine is present on residues Ser931 and Ser961. A coiled-coil region spans residues 934-961; sequence ALREWGRCQARCQELERRIQQHVGEEAS. Positions 955 to 1031 are disordered; that stretch reads HVGEEASPRG…ELAPEAEGRP (77 aa). Residues 980–996 are compositionally biased toward low complexity; it reads WGPRSPSPSLSSLLLPS. Ser1082 is subject to Phosphoserine. One can recognise a DH domain in the interval 1085–1253; sequence AQQRLVSELI…REQEARGRDL (169 aa). A PH domain is found at 1265–1372; it reads DLKEQGQLLH…WTSSIAQLLW (108 aa). 3 positions are modified to phosphoserine: Ser1433, Ser1438, and Ser1474. Residues 1466-1519 form a disordered region; the sequence is TLDSSGDVSPGPRNSPSLQPPHPGSSTPTLASRGILGLSRQSHARALSDPTTPL. A compositionally biased stretch (polar residues) spans 1467 to 1482; that stretch reads LDSSGDVSPGPRNSPS. Thr1492 is subject to Phosphothreonine.

In terms of tissue distribution, expressed at higher level in the central nervous system and skeletal muscle and greater abundance in fetal than adult brain (at protein level).

The protein localises to the cytoplasm. Its function is as follows. May act as a guanine nucleotide exchange factor (GEF). The protein is Rho guanine nucleotide exchange factor 40 (ARHGEF40) of Homo sapiens (Human).